A 322-amino-acid polypeptide reads, in one-letter code: Large ribosomal subunit protein uL10 (322 aa).

The segment at 294–322 (APAAAAKAEKEEEPAEESDDEMGFGLFDE) is disordered. The segment covering 304 to 322 (EEEPAEESDDEMGFGLFDE) has biased composition (acidic residues).

Belongs to the universal ribosomal protein uL10 family. P0 forms a pentameric complex by interaction with dimers of P1 and P2. In terms of processing, phosphorylated.

Its function is as follows. Ribosomal protein P0 is the functional equivalent of E.coli protein L10. The sequence is that of Large ribosomal subunit protein uL10 from Lupinus luteus (European yellow lupine).